A 165-amino-acid chain; its full sequence is Lipoprotein signal peptidase (165 aa).

The next 2 membrane-spanning stretches (helical) occupy residues 64–84 (LGRW…GAWM) and 88–108 (GSRL…GNAV). Catalysis depends on residues Asp-118 and Asp-136. Residues 128 to 148 (SWYVFNVADAGIVAGVAGLLV) form a helical membrane-spanning segment.

It belongs to the peptidase A8 family.

It localises to the cell inner membrane. It catalyses the reaction Release of signal peptides from bacterial membrane prolipoproteins. Hydrolyzes -Xaa-Yaa-Zaa-|-(S,diacylglyceryl)Cys-, in which Xaa is hydrophobic (preferably Leu), and Yaa (Ala or Ser) and Zaa (Gly or Ala) have small, neutral side chains.. The protein operates within protein modification; lipoprotein biosynthesis (signal peptide cleavage). This protein specifically catalyzes the removal of signal peptides from prolipoproteins. The sequence is that of Lipoprotein signal peptidase from Methylobacterium sp. (strain 4-46).